The primary structure comprises 337 residues: C5a anaphylatoxin chemotactic receptor 2 (337 aa).

Over 1-38 (MGNDSVSYEYGDYSDLSDRPVDCLDGACLAIDPLRVAP) the chain is Extracellular. N-linked (GlcNAc...) asparagine glycosylation is present at N3. Residues 39-61 (LPLYAAIFLVGVPGNAMVAWVAG) form a helical membrane-spanning segment. Residues 62-72 (KVARRRVGATW) lie on the Cytoplasmic side of the membrane. The chain crosses the membrane as a helical span at residues 73-95 (LLHLAVADLLCCLSLPILAVPIA). The Extracellular segment spans residues 96 to 114 (RGGHWPYGAVGCRALPSII). A disulfide bond links C107 and C186. The chain crosses the membrane as a helical span at residues 115–137 (LLTMYASVLLLAALSADLCFLAL). Residues 138-149 (GPAWWSTVQRAC) lie on the Cytoplasmic side of the membrane. Residues 150-172 (GVQVACGAAWTLALLLTVPSAIY) traverse the membrane as a helical segment. Residues 173–202 (RRLHQEHFPARLQCVVDYGGSSSTENAVTA) are Extracellular-facing. Residues 203–225 (IRFLFGFLGPLVAVASCHSALLC) form a helical membrane-spanning segment. At 226 to 237 (WAARRCRPLGTA) the chain is on the cytoplasmic side. Residues 238 to 260 (IVVGFFVCWAPYHLLGLVLTVAA) traverse the membrane as a helical segment. The Extracellular segment spans residues 261 to 274 (PNSALLARALRAEP). A helical membrane pass occupies residues 275–294 (LIVGLALAHSCLNPMLFLYF). Over 295 to 337 (GRAQLRRSLPAACHWALRESQGQDESVDSKKSTSHDLVSEMEV) the chain is Cytoplasmic. The residue at position 320 (S320) is a Phosphoserine.

It belongs to the G-protein coupled receptor 1 family. As to quaternary structure, interacts with C3 (the anaphylatoxin peptide C3a and the adipogenic hormone ASP); the interaction occurs with higher affinity for ASP, enhancing the phosphorylation and activation of GPR77, recruitment of ARRB2 to the cell surface and endocytosis of GRP77. Frontal cortex, hippocampus, hypothalamus, pons and liver.

The protein resides in the cell membrane. In terms of biological role, receptor for the chemotactic and inflammatory C3a, C4a and C5a anaphylatoxin peptides and also for their dearginated forms ASP/C3adesArg, C4adesArg and C5adesArg respectively. Couples weakly to G(i)-mediated signaling pathways. This chain is C5a anaphylatoxin chemotactic receptor 2 (C5AR2), found in Homo sapiens (Human).